The primary structure comprises 452 residues: Neuromedin-K receptor (452 aa).

At 1–71 the chain is on the extracellular side; the sequence is MASVPRGENW…TNQFVQPSWR (71 aa). 4 N-linked (GlcNAc...) asparagine glycosylation sites follow: Asn-9, Asn-23, Asn-40, and Asn-60. The chain crosses the membrane as a helical span at residues 72-94; the sequence is IALWSLAYGLVVAVAVFGNLIVI. At 95-104 the chain is on the cytoplasmic side; it reads WIILAHKRMR. Residues 105-126 traverse the membrane as a helical segment; that stretch reads TVTNYFLVNLAFSDASVAAFNT. Topologically, residues 127 to 146 are extracellular; it reads LINFIYGLHSEWYFGANYCR. Cysteines 145 and 220 form a disulfide. A helical membrane pass occupies residues 147-168; that stretch reads FQNFFPITAVFASIYSMTAIAV. Residues 169-188 are Cytoplasmic-facing; that stretch reads DRYMAIIDPLKPRLSATATK. The chain crosses the membrane as a helical span at residues 189-209; the sequence is IVIGSIWILAFLLAFPQCLYS. The Extracellular segment spans residues 210–232; sequence KIKVMPGRTLCYVQWPEGPKQHF. A helical transmembrane segment spans residues 233–257; that stretch reads TYHIIVIILVYCFPLLIMGVTYTIV. Over 258 to 286 the chain is Cytoplasmic; that stretch reads GITLWGGEIPGDTCDKYHEQLKAKRKVVK. The helical transmembrane segment at 287–308 threads the bilayer; that stretch reads MMIIVVVTFAICWLPYHVYFIL. Residues 309–321 are Extracellular-facing; sequence TAIYQQLNRWKYI. Residues 322 to 346 form a helical membrane-spanning segment; sequence QQVYLASFWLAMSSTMYNPIIYCCL. The Cytoplasmic portion of the chain corresponds to 347-452; it reads NKRFRAGFKR…SPYTSVDEYS (106 aa). Cys-361 carries the S-palmitoyl cysteine lipid modification. The tract at residues 400 to 452 is disordered; the sequence is FDPNDGDPTKSSRKKRAVPRDPSANGCSHRGSKSASTTSSFISSPYTSVDEYS. Over residues 432–452 the composition is skewed to low complexity; sequence KSASTTSSFISSPYTSVDEYS.

It belongs to the G-protein coupled receptor 1 family. In terms of processing, the anchoring of this receptor to the plasma membrane is probably mediated by the palmitoylation of a cysteine residue.

The protein localises to the cell membrane. Functionally, this is a receptor for the tachykinin neuropeptide neuromedin-K (neurokinin B). It is associated with G proteins that activate a phosphatidylinositol-calcium second messenger system. The rank order of affinity of this receptor to tachykinins is: neuromedin-K &gt; substance K &gt; substance P. In Rattus norvegicus (Rat), this protein is Neuromedin-K receptor (Tacr3).